The following is a 134-amino-acid chain: Holo-[acyl-carrier-protein] synthase (134 aa).

Mg(2+) is bound by residues Asp8 and Glu57.

Belongs to the P-Pant transferase superfamily. AcpS family. Requires Mg(2+) as cofactor.

Its subcellular location is the cytoplasm. It carries out the reaction apo-[ACP] + CoA = holo-[ACP] + adenosine 3',5'-bisphosphate + H(+). Transfers the 4'-phosphopantetheine moiety from coenzyme A to a Ser of acyl-carrier-protein. This chain is Holo-[acyl-carrier-protein] synthase, found in Rhizobium rhizogenes (strain K84 / ATCC BAA-868) (Agrobacterium radiobacter).